Reading from the N-terminus, the 295-residue chain is ATP synthase gamma chain (295 aa).

The protein belongs to the ATPase gamma chain family. As to quaternary structure, F-type ATPases have 2 components, CF(1) - the catalytic core - and CF(0) - the membrane proton channel. CF(1) has five subunits: alpha(3), beta(3), gamma(1), delta(1), epsilon(1). CF(0) has three main subunits: a, b and c.

It is found in the cell membrane. Its function is as follows. Produces ATP from ADP in the presence of a proton gradient across the membrane. The gamma chain is believed to be important in regulating ATPase activity and the flow of protons through the CF(0) complex. The sequence is that of ATP synthase gamma chain from Acetivibrio thermocellus (strain ATCC 27405 / DSM 1237 / JCM 9322 / NBRC 103400 / NCIMB 10682 / NRRL B-4536 / VPI 7372) (Clostridium thermocellum).